The chain runs to 312 residues: MRIQLNTIDLQCIIALSCLGQFVHAEANREDLKQIDFQFPVLERAATKTPFPDWLSAFTGLKEWPGLDPPYIPLDFIDFSQIPDYKEYDQNHCDSVPRDSCSFDCHHCTEHDDVYTCSKLSQTFDDGPSASTTKLLDRLKHNSTFFNLGVNIVQHPDIYQRMQKEGHLIGSHTWSHVYLPNVSNEKIIAQIEWSIWAMNATGNHTPKWFRPPYGGIDNRVRAITRQFGLQAVLWDHDTFDWSLLLNDSVITEQEILQNVINWNKSGTGLILEHDSTEKTVDLAIKINKLIGDDQSTVSHCVGGIDYIKEFLS.

An N-terminal signal peptide occupies residues 1-44 (MRIQLNTIDLQCIIALSCLGQFVHAEANREDLKQIDFQFPVLER). Cys-117 and Cys-300 are oxidised to a cystine. One can recognise a NodB homology domain in the interval 118–307 (SKLSQTFDDG…SHCVGGIDYI (190 aa)). Asp-125 (proton acceptor) is an active-site residue. Asp-125 is a binding site for acetate. Asp-126 is a Co(2+) binding site. Asn-142 carries an N-linked (GlcNAc...) asparagine glycan. 2 residues coordinate Co(2+): His-172 and His-176. Residues Asn-181 and Asn-199 are each glycosylated (N-linked (GlcNAc...) asparagine). Tyr-213 lines the acetate pocket. N-linked (GlcNAc...) asparagine glycans are attached at residues Asn-246 and Asn-263. The active-site Proton donor is His-273.

It belongs to the polysaccharide deacetylase family. In terms of assembly, monomer. The cofactor is Co(2+). N-glycosylated.

It localises to the prospore. It carries out the reaction [(1-&gt;4)-N-acetyl-beta-D-glucosaminyl](n) + n H2O = chitosan + n acetate. Hydrolyzes the N-acetamido groups of N-acetyl-D-glucosamine residues in chitin to form chitosan and acetate. Chitosan is a component of the spore wall. The sequence is that of Chitin deacetylase 2 from Saccharomyces cerevisiae (strain ATCC 204508 / S288c) (Baker's yeast).